Here is a 59-residue protein sequence, read N- to C-terminus: U-reduvitoxin-Pr6a (59 aa).

The signal sequence occupies residues Met-1–Gly-19. 3 disulfide bridges follow: Cys-31/Cys-46, Cys-38/Cys-51, and Cys-45/Cys-58.

The protein belongs to the venom Ptu1-like knottin family. Expressed by the venom gland.

It is found in the secreted. Binds reversibly and blocks P/Q-type voltage-gated calcium channels (Cav). This chain is U-reduvitoxin-Pr6a, found in Platymeris rhadamanthus (Red spot assassin bug).